A 284-amino-acid chain; its full sequence is Tropomyosin (284 aa).

The tract at residues methionine 1–threonine 39 is disordered. A coiled-coil region spans residues methionine 1–tyrosine 284. Residues lysine 12 to threonine 39 show a composition bias toward basic and acidic residues.

This sequence belongs to the tropomyosin family. As to quaternary structure, homodimer.

Functionally, tropomyosin, in association with the troponin complex, plays a central role in the calcium dependent regulation of muscle contraction. The chain is Tropomyosin (TM1) from Homarus americanus (American lobster).